Here is a 449-residue protein sequence, read N- to C-terminus: Deoxyguanosinetriphosphate triphosphohydrolase-like protein (449 aa).

The disordered stretch occupies residues 1–27 (MTSSVWQERRHGEDKQRRNDHRSPYQR). Residues 7–27 (QERRHGEDKQRRNDHRSPYQR) show a composition bias toward basic and acidic residues. The HD domain occupies 59–255 (RLTHSLEVSQ…MELADDIAYA (197 aa)).

Belongs to the dGTPase family. Type 2 subfamily.

This Shewanella baltica (strain OS223) protein is Deoxyguanosinetriphosphate triphosphohydrolase-like protein.